The following is a 429-amino-acid chain: Guanine nucleotide-binding protein subunit alpha (429 aa).

Gly-2 carries the N-myristoyl glycine lipid modification. Cys-3 carries S-palmitoyl cysteine lipidation. In terms of domain architecture, G-alpha spans 40–429 (KGVKLLLLGA…QQNLKKSGIM (390 aa)). The segment at 43 to 56 (KLLLLGAGESGKST) is G1 motif. The GTP site is built by Glu-51, Ser-52, Gly-53, Lys-54, Ser-55, and Thr-56. Mg(2+) is bound at residue Ser-55. The interval 125–197 (LKQIDADVAG…KDSEQFTRLS (73 aa)) is not present in other G-proteins. Positions 249–257 (DILKGRIKT) are G2 motif. Positions 251, 257, 279, 345, 346, 348, and 401 each coordinate GTP. Thr-257 contacts Mg(2+). The segment at 272 to 281 (FKVLDAGGQR) is G3 motif. The segment at 341–348 (ILFLNKID) is G4 motif. The interval 399–404 (TCATDS) is G5 motif.

It belongs to the G-alpha family. G(q) subfamily. As to quaternary structure, g proteins are composed of 3 units; alpha, beta and gamma. The alpha chain contains the guanine nucleotide binding site. It depends on Mg(2+) as a cofactor.

Guanine nucleotide-binding proteins (G proteins) are involved as modulators or transducers in various transmembrane signaling systems. Involved in the mating pathway. This is Guanine nucleotide-binding protein subunit alpha (CAG1) from Candida albicans (strain WO-1) (Yeast).